Consider the following 207-residue polypeptide: Early nodulin-like protein 11 (207 aa).

An N-terminal signal peptide occupies residues 1–24 (MVSLISIVSVVFLLFTTFYHFGEA). A Phytocyanin domain is found at 25 to 130 (RIINVGGSLD…GEKVTVVVQS (106 aa)). N-linked (GlcNAc...) asparagine glycosylation is present at N43. C83 and C118 are joined by a disulfide. The segment at 129-179 (QSPNHPKPGPAAVTPTLPPKPSTTPAAPAPAPPTPSPKSSTSTMAPAPAPA) is disordered. Positions 144 to 164 (TLPPKPSTTPAAPAPAPPTPS) are enriched in pro residues. Low complexity predominate over residues 165–179 (PKSSTSTMAPAPAPA). S181 carries GPI-anchor amidated serine lipidation. Positions 182 to 207 (SAVGLVAGNGIFWASTLVAVIGLAFA) are cleaved as a propeptide — removed in mature form.

It belongs to the early nodulin-like (ENODL) family. In terms of tissue distribution, confined to flowers and siliques.

The protein localises to the cell membrane. In terms of biological role, may act as a carbohydrate transporter. Required, together with ENODL11, ENODL12, ENODL13, ENODL14 and ENODL15, for male-female communication and pollen tube reception and burst at the synergid cell surface of the female gametophyte. In Arabidopsis thaliana (Mouse-ear cress), this protein is Early nodulin-like protein 11.